We begin with the raw amino-acid sequence, 300 residues long: Pantothenate synthetase (300 aa).

Position 30-37 (30-37) interacts with ATP; that stretch reads MGYLHEGH. H37 (proton donor) is an active-site residue. Q61 contacts (R)-pantoate. Q61 contributes to the beta-alanine binding site. Residue 147 to 150 coordinates ATP; it reads GMKD. Q153 contributes to the (R)-pantoate binding site. Residues V176 and 184-187 each bind ATP; that span reads KSSR.

Belongs to the pantothenate synthetase family. In terms of assembly, homodimer.

The protein localises to the cytoplasm. It carries out the reaction (R)-pantoate + beta-alanine + ATP = (R)-pantothenate + AMP + diphosphate + H(+). It functions in the pathway cofactor biosynthesis; (R)-pantothenate biosynthesis; (R)-pantothenate from (R)-pantoate and beta-alanine: step 1/1. Catalyzes the condensation of pantoate with beta-alanine in an ATP-dependent reaction via a pantoyl-adenylate intermediate. This Geobacillus kaustophilus (strain HTA426) protein is Pantothenate synthetase.